A 196-amino-acid polypeptide reads, in one-letter code: dITP/XTP pyrophosphatase (196 aa).

8-13 (TKNEGK) serves as a coordination point for substrate. Mg(2+) is bound by residues E41 and D70. Catalysis depends on D70, which acts as the Proton acceptor. Substrate-binding positions include S71, 153–156 (FGYD), K176, and 181–182 (HR).

It belongs to the HAM1 NTPase family. As to quaternary structure, homodimer. Requires Mg(2+) as cofactor.

The catalysed reaction is XTP + H2O = XMP + diphosphate + H(+). It catalyses the reaction dITP + H2O = dIMP + diphosphate + H(+). It carries out the reaction ITP + H2O = IMP + diphosphate + H(+). In terms of biological role, pyrophosphatase that catalyzes the hydrolysis of nucleoside triphosphates to their monophosphate derivatives, with a high preference for the non-canonical purine nucleotides XTP (xanthosine triphosphate), dITP (deoxyinosine triphosphate) and ITP. Seems to function as a house-cleaning enzyme that removes non-canonical purine nucleotides from the nucleotide pool, thus preventing their incorporation into DNA/RNA and avoiding chromosomal lesions. This is dITP/XTP pyrophosphatase from Bacillus licheniformis (strain ATCC 14580 / DSM 13 / JCM 2505 / CCUG 7422 / NBRC 12200 / NCIMB 9375 / NCTC 10341 / NRRL NRS-1264 / Gibson 46).